The chain runs to 58 residues: Large ribosomal subunit protein uL30 (58 aa).

This sequence belongs to the universal ribosomal protein uL30 family. As to quaternary structure, part of the 50S ribosomal subunit.

This is Large ribosomal subunit protein uL30 from Bacteroides thetaiotaomicron (strain ATCC 29148 / DSM 2079 / JCM 5827 / CCUG 10774 / NCTC 10582 / VPI-5482 / E50).